The primary structure comprises 180 residues: Ribosome maturation factor RimM (180 aa).

Residues 104-177 (PEEFHDHQLV…RVVVDPPGGL (74 aa)) form the PRC barrel domain.

It belongs to the RimM family. As to quaternary structure, binds ribosomal protein uS19.

The protein localises to the cytoplasm. An accessory protein needed during the final step in the assembly of 30S ribosomal subunit, possibly for assembly of the head region. Essential for efficient processing of 16S rRNA. May be needed both before and after RbfA during the maturation of 16S rRNA. It has affinity for free ribosomal 30S subunits but not for 70S ribosomes. The sequence is that of Ribosome maturation factor RimM from Salinispora arenicola (strain CNS-205).